The primary structure comprises 214 residues: MTDSSPQSNPNAVPGAADVPAAAEGQQQQEQRRGRGDRDGRRGDRRGGRRGQERDSEWQERVVQIRRVSKTVKGGKKMSFRAIVVVGNEKGQVGVGVGKAGDVIGAVRKGVADGKKHLVKVPLTRHNSIPTLSNGRDGAASVLIRPAAPGTGVIAGGSIRTVLELAGIKNVLAKRLGSKTPLNNARAAMVALSLLRTHKETAKERGISLEQIYS.

The disordered stretch occupies residues 1–61 (MTDSSPQSNP…QERDSEWQER (61 aa)). The segment covering 9-29 (NPNAVPGAADVPAAAEGQQQQ) has biased composition (low complexity). The segment covering 30–60 (EQRRGRGDRDGRRGDRRGGRRGQERDSEWQE) has biased composition (basic and acidic residues). One can recognise an S5 DRBM domain in the interval 58–121 (WQERVVQIRR…ADGKKHLVKV (64 aa)).

This sequence belongs to the universal ribosomal protein uS5 family. Part of the 30S ribosomal subunit. Contacts proteins S4 and S8.

With S4 and S12 plays an important role in translational accuracy. Functionally, located at the back of the 30S subunit body where it stabilizes the conformation of the head with respect to the body. The polypeptide is Small ribosomal subunit protein uS5 (Synechococcus sp. (strain CC9605)).